The sequence spans 218 residues: Ubiquitin-conjugating enzyme E2-24 kDa (218 aa).

Residues 3 to 148 (SSKRRIETDV…IKEYIDKYAT (146 aa)) form the UBC core domain. Cys-85 functions as the Glycyl thioester intermediate in the catalytic mechanism. The tract at residues 154 to 218 (QMFGGDNDSD…DDDYDEVANQ (65 aa)) is disordered. Acidic residues-rich tracts occupy residues 160–183 (NDSD…EDMD) and 192–218 (DSVD…VANQ).

This sequence belongs to the ubiquitin-conjugating enzyme family.

The protein localises to the cytoplasm. It catalyses the reaction S-ubiquitinyl-[E1 ubiquitin-activating enzyme]-L-cysteine + [E2 ubiquitin-conjugating enzyme]-L-cysteine = [E1 ubiquitin-activating enzyme]-L-cysteine + S-ubiquitinyl-[E2 ubiquitin-conjugating enzyme]-L-cysteine.. Its pathway is protein modification; protein ubiquitination. Its function is as follows. Catalyzes the covalent attachment of ubiquitin to other proteins. Required for the adaptation to the presence of glucose in the growth medium; mediates the degradation of enzymes involved in gluconeogenesis when cells are shifted to glucose-containing medium. Required for proteasome-dependent catabolite degradation of fructose-1,6-bisphosphatase (FBP1). This Saccharomyces cerevisiae (strain ATCC 204508 / S288c) (Baker's yeast) protein is Ubiquitin-conjugating enzyme E2-24 kDa (UBC8).